The sequence spans 309 residues: tRNA hydroxylation protein P2 (309 aa).

It belongs to the peptidase U32 family.

Involved in prephenate-dependent formation of 5-hydroxyuridine (ho5U) modification at position 34 in tRNAs, the first step in 5-methoxyuridine (mo5U) biosynthesis. The protein is tRNA hydroxylation protein P2 of Bacillus subtilis (strain 168).